The primary structure comprises 201 residues: Two-component response regulator ORR9 (201 aa).

Residues 10 to 142 (HVLAVDDSLP…DMSKLKPHIL (133 aa)) form the Response regulatory domain. The residue at position 75 (Asp-75) is a 4-aspartylphosphate. A disordered region spans residues 149–201 (HYQQEQNLQSNSESNNSSNPTSENSSSSTSSNSHKRKAVDEEILPHTIRPRHS). Residues 158–180 (SNSESNNSSNPTSENSSSSTSSN) are compositionally biased toward low complexity.

This sequence belongs to the ARR family. Type-A subfamily. In terms of processing, two-component system major event consists of a His-to-Asp phosphorelay between a sensor histidine kinase (HK) and a response regulator (RR). In plants, the His-to-Asp phosphorelay involves an additional intermediate named Histidine-containing phosphotransfer protein (HPt). This multistep phosphorelay consists of a His-Asp-His-Asp sequential transfer of a phosphate group between first a His and an Asp of the HK protein, followed by the transfer to a conserved His of the HPt protein and finally the transfer to an Asp in the receiver domain of the RR protein.

Functionally, functions as a response regulator involved in His-to-Asp phosphorelay signal transduction system. Phosphorylation of the Asp residue in the receiver domain activates the ability of the protein to promote the transcription of target genes. Type-A response regulators seem to act as negative regulators of the cytokinin signaling. This Oryza sativa subsp. japonica (Rice) protein is Two-component response regulator ORR9.